The primary structure comprises 257 residues: Ethanolamine ammonia-lyase small subunit (257 aa).

Residues V153, E174, and C203 each coordinate adenosylcob(III)alamin.

It belongs to the EutC family. The basic unit is a heterodimer which dimerizes to form tetramers. The heterotetramers trimerize; 6 large subunits form a core ring with 6 small subunits projecting outwards. Adenosylcob(III)alamin is required as a cofactor.

The protein localises to the bacterial microcompartment. The catalysed reaction is ethanolamine = acetaldehyde + NH4(+). Its pathway is amine and polyamine degradation; ethanolamine degradation. Its function is as follows. Catalyzes the deamination of various vicinal amino-alcohols to oxo compounds. Allows this organism to utilize ethanolamine as the sole source of nitrogen and carbon in the presence of external vitamin B12. This is Ethanolamine ammonia-lyase small subunit from Rhodococcus erythropolis (Arthrobacter picolinophilus).